Reading from the N-terminus, the 571-residue chain is Septation ring formation regulator EzrA (571 aa).

The Extracellular segment spans residues 1–3 (MYY). Residues 4–22 (MLIGFIIVVIAVIGAGYIL) form a helical membrane-spanning segment. The Cytoplasmic portion of the chain corresponds to 23–571 (KRKHYQRINE…ASKVSVDDIE (549 aa)). Coiled coils occupy residues 102 to 147 (ATNA…TKEK), 248 to 298 (LAQM…DTLE), 326 to 374 (DALA…ASGE), 400 to 437 (KFAE…ERER), and 478 to 529 (RIAE…ENHF).

Belongs to the EzrA family.

It localises to the cell membrane. Its function is as follows. Negative regulator of FtsZ ring formation; modulates the frequency and position of FtsZ ring formation. Inhibits FtsZ ring formation at polar sites. Interacts either with FtsZ or with one of its binding partners to promote depolymerization. In Listeria monocytogenes serotype 4a (strain HCC23), this protein is Septation ring formation regulator EzrA.